Here is a 555-residue protein sequence, read N- to C-terminus: Glutamine--tRNA ligase (555 aa).

Residues P34–H44 carry the 'HIGH' region motif. Residues E35–N37 and H41–S47 contribute to the ATP site. Positions 67 and 212 each coordinate L-glutamine. Residues T231, R261–L262, and M269–K271 contribute to the ATP site. The 'KMSKS' region motif lies at V268–R272. The interval T317–E324 is interaction with tRNA.

The protein belongs to the class-I aminoacyl-tRNA synthetase family. In terms of assembly, monomer.

It localises to the cytoplasm. The catalysed reaction is tRNA(Gln) + L-glutamine + ATP = L-glutaminyl-tRNA(Gln) + AMP + diphosphate. The polypeptide is Glutamine--tRNA ligase (Citrobacter koseri (strain ATCC BAA-895 / CDC 4225-83 / SGSC4696)).